A 92-amino-acid polypeptide reads, in one-letter code: Probable Fe(2+)-trafficking protein (92 aa).

The protein belongs to the Fe(2+)-trafficking protein family.

Could be a mediator in iron transactions between iron acquisition and iron-requiring processes, such as synthesis and/or repair of Fe-S clusters in biosynthetic enzymes. The chain is Probable Fe(2+)-trafficking protein from Xanthomonas campestris pv. campestris (strain 8004).